The chain runs to 382 residues: Mannitol-1-phosphate 5-dehydrogenase (382 aa).

Position 3–14 (3–14 (ALHFGAGNIGRG)) interacts with NAD(+). The residue at position 269 (K269) is an N6-acetyllysine.

Belongs to the mannitol dehydrogenase family. Monomer.

The catalysed reaction is D-mannitol 1-phosphate + NAD(+) = beta-D-fructose 6-phosphate + NADH + H(+). This Escherichia coli O157:H7 protein is Mannitol-1-phosphate 5-dehydrogenase.